The primary structure comprises 319 residues: Aspartate carbamoyltransferase catalytic subunit (319 aa).

The carbamoyl phosphate site is built by Arg65 and Thr66. Residue Lys93 coordinates L-aspartate. Carbamoyl phosphate is bound by residues Arg115, His149, and Gln152. L-aspartate-binding residues include Arg182 and Arg237. Carbamoyl phosphate-binding residues include Gly278 and Pro279.

This sequence belongs to the aspartate/ornithine carbamoyltransferase superfamily. ATCase family. In terms of assembly, heterododecamer (2C3:3R2) of six catalytic PyrB chains organized as two trimers (C3), and six regulatory PyrI chains organized as three dimers (R2).

It catalyses the reaction carbamoyl phosphate + L-aspartate = N-carbamoyl-L-aspartate + phosphate + H(+). Its pathway is pyrimidine metabolism; UMP biosynthesis via de novo pathway; (S)-dihydroorotate from bicarbonate: step 2/3. Its function is as follows. Catalyzes the condensation of carbamoyl phosphate and aspartate to form carbamoyl aspartate and inorganic phosphate, the committed step in the de novo pyrimidine nucleotide biosynthesis pathway. The protein is Aspartate carbamoyltransferase catalytic subunit of Azoarcus sp. (strain BH72).